The sequence spans 432 residues: Adenylosuccinate synthetase (432 aa).

GTP is bound by residues 12-18 and 40-42; these read GDEGKGK and GHT. Catalysis depends on aspartate 13, which acts as the Proton acceptor. Mg(2+) contacts are provided by aspartate 13 and glycine 40. IMP-binding positions include 13 to 16, 38 to 41, threonine 132, arginine 146, glutamine 226, threonine 241, and arginine 305; these read DEGK and NAGH. Histidine 41 serves as the catalytic Proton donor. Residue 301–307 participates in substrate binding; that stretch reads TVTGRKR. Residues arginine 307, 333-335, and 415-417 contribute to the GTP site; these read KLD and STS.

The protein belongs to the adenylosuccinate synthetase family. Homodimer. Requires Mg(2+) as cofactor.

The protein resides in the cytoplasm. It carries out the reaction IMP + L-aspartate + GTP = N(6)-(1,2-dicarboxyethyl)-AMP + GDP + phosphate + 2 H(+). Its pathway is purine metabolism; AMP biosynthesis via de novo pathway; AMP from IMP: step 1/2. Its function is as follows. Plays an important role in the de novo pathway of purine nucleotide biosynthesis. Catalyzes the first committed step in the biosynthesis of AMP from IMP. The chain is Adenylosuccinate synthetase from Allorhizobium ampelinum (strain ATCC BAA-846 / DSM 112012 / S4) (Agrobacterium vitis (strain S4)).